A 330-amino-acid polypeptide reads, in one-letter code: Phenylalanine--tRNA ligase alpha subunit (330 aa).

Glu-246 contacts Mg(2+).

The protein belongs to the class-II aminoacyl-tRNA synthetase family. Phe-tRNA synthetase alpha subunit type 1 subfamily. As to quaternary structure, tetramer of two alpha and two beta subunits. It depends on Mg(2+) as a cofactor.

The protein resides in the cytoplasm. The enzyme catalyses tRNA(Phe) + L-phenylalanine + ATP = L-phenylalanyl-tRNA(Phe) + AMP + diphosphate + H(+). This Sulfurovum sp. (strain NBC37-1) protein is Phenylalanine--tRNA ligase alpha subunit.